Reading from the N-terminus, the 303-residue chain is Mycothiol acetyltransferase (303 aa).

N-acetyltransferase domains lie at 6–134 (TSLA…VEGD) and 154–303 (NEAY…QSSS). Glu37 is a binding site for 1D-myo-inositol 2-(L-cysteinylamino)-2-deoxy-alpha-D-glucopyranoside. Acetyl-CoA-binding positions include 75–77 (VVV) and 83–88 (RQGYGS). Residues Glu180, Lys221, and Glu233 each contribute to the 1D-myo-inositol 2-(L-cysteinylamino)-2-deoxy-alpha-D-glucopyranoside site. Residues 237–239 (VGL) and 244–250 (RRRGLGD) contribute to the acetyl-CoA site. 1D-myo-inositol 2-(L-cysteinylamino)-2-deoxy-alpha-D-glucopyranoside is bound at residue Tyr271. 276–281 (NESARR) is a binding site for acetyl-CoA.

It belongs to the acetyltransferase family. MshD subfamily. In terms of assembly, monomer.

The catalysed reaction is 1D-myo-inositol 2-(L-cysteinylamino)-2-deoxy-alpha-D-glucopyranoside + acetyl-CoA = mycothiol + CoA + H(+). In terms of biological role, catalyzes the transfer of acetyl from acetyl-CoA to desacetylmycothiol (Cys-GlcN-Ins) to form mycothiol. This chain is Mycothiol acetyltransferase, found in Corynebacterium diphtheriae (strain ATCC 700971 / NCTC 13129 / Biotype gravis).